The primary structure comprises 271 residues: Formamidopyrimidine-DNA glycosylase (271 aa).

Proline 2 serves as the catalytic Schiff-base intermediate with DNA. Glutamate 3 serves as the catalytic Proton donor. The active-site Proton donor; for beta-elimination activity is lysine 58. DNA-binding residues include arginine 110 and arginine 152. The segment at 237–271 adopts an FPG-type zinc-finger fold; it reads AVYGQTGKPCTVCGTPIARIRLGNRSTWFCPVCQK. Residue arginine 261 is the Proton donor; for delta-elimination activity of the active site.

This sequence belongs to the FPG family. Monomer. Requires Zn(2+) as cofactor.

The catalysed reaction is Hydrolysis of DNA containing ring-opened 7-methylguanine residues, releasing 2,6-diamino-4-hydroxy-5-(N-methyl)formamidopyrimidine.. It carries out the reaction 2'-deoxyribonucleotide-(2'-deoxyribose 5'-phosphate)-2'-deoxyribonucleotide-DNA = a 3'-end 2'-deoxyribonucleotide-(2,3-dehydro-2,3-deoxyribose 5'-phosphate)-DNA + a 5'-end 5'-phospho-2'-deoxyribonucleoside-DNA + H(+). In terms of biological role, involved in base excision repair of DNA damaged by oxidation or by mutagenic agents. Acts as a DNA glycosylase that recognizes and removes damaged bases. Has a preference for oxidized purines, such as 7,8-dihydro-8-oxoguanine (8-oxoG). Has AP (apurinic/apyrimidinic) lyase activity and introduces nicks in the DNA strand. Cleaves the DNA backbone by beta-delta elimination to generate a single-strand break at the site of the removed base with both 3'- and 5'-phosphates. The protein is Formamidopyrimidine-DNA glycosylase of Geobacter sulfurreducens (strain ATCC 51573 / DSM 12127 / PCA).